The following is a 2329-amino-acid chain: MNTTDCFVALIHIFREIKALFLSRTQGKMEFTLHNGEKKTFYSRPNNHDNCWLNTILQLFRYVDEPFFDWVYDSPENLTLEAIKQLEEVTGLELHEGGPPALVIWNIKHLLHTGVGTASRPSEVCMVDGTDMCLADSHAGIFLKGQEHAVFACVTSNGWYAIDDEDFYPWTPDPSDVLVFVPYDQEPLNGEWKAKVQKRLKGAGQSSPATGSQNQSGNTGSIINNYYMQQYQNSMDTQLGDNAISGGSNEGSTDTTSTHTNNTQNNDWFSRLASSAFSGLFGALLADKKTEETTLLEDRILTTRNGHTTSTTQSSVGVTYGYAVAEDAVSGPNTSGLETRVTQAERFFKKHLFDWTPDLSFGHCHYLELPSEHKGVFGSLMSSYAYMRNGWDIEVTAVGNQFNGGCLLVALVPELKELDTRQKYQLTLFPHQFINPRTNMTAHINVPYVGVNRYDQYELHKPWTLVVMVVAPLTVKTGGSEQIKVYMNAAPTYVHVAGELPSKEGIVPVACVDGYGNMVTTDPKTADPVYGKVSNPPRTSFPGRFTNFLDVAEACPTFLRFGEVPFVKTVNSGDRLLAKFDVSLAAGHMSNTYLAGLAQYYTQYSGTMNIHFMFTGPTDAKARYMVAYIPPGMTPPTDPERAAHCIHSEWDTGLNSKFTFSIPYLSAADYAYTASDVAETTSVQGWVCIYQITHGKAEGDALVVSVSAGKDFEFRLPVDARQQTTTTGESADPVTTTVENYGGETQTARRLHTDVAFVLDRFVKLTQPKSTQTLDLMQIPSHTLVGALLRSATYYFSDLEVALVHTGPVTWVPNGAPKTALNNHTNPTAYQKQPITRLALPYTAPHRVLSTVYNGKTTYGEESSRRGDLAALARRVNNRLPTSFNYGAVKADTITELLIRMKRAETYCPRPLLALDTTQDRRKQKIIAPEKQTLNFDLLKLAGDVESNPGPFFFSDVRSNFTKLVDTINQMQEDMSTKHGPDFNRLVSAFEELATGVKAIRTGLDEAKPWYKLIKLLSRLSCMAAVAARSKDPVLVAIMLADTGLEILDSTFVVKKISDSLSSLFHVPAPVFSFGAPVLLAGLVKVASSFFRSTPEEPERAEKQLKARDINDIFAILKNGEWLVKLILAIRDWIKAWIAPEEKFVTMTDLVPGILEKQPDLNGPSKYKEAKEWLDNARQACLKSGNVHIANLCKVVAPAPSKSRPEPVVVCLRGKSGQGKSFLADVLAQAISTHYTGRIDSVWYCPPDLDHFDGYNQQTVVVMDDLGQNPDGKDFKYFAQMVSTTGFIPPMASLEDKGKPFNSKVIIATTNLYSGFTPRTMVCPDALNRRFHFDIDVSAKDGYKINNKLDIIKALEDTHTNPVAMFQYDCALLNGMAVEMKRMQQDMFKPQPPLQNVYQLVQEVIDRVELHEKVSSHPIFKQISIPSQKSVLYFLIEKGQHEAAIEFFEGMVHDSIKEELRPLIQQTSFVKRAFKRLKENFEIVALCLTLLANIVIMIRETRKRQQMVNDAVNEYIDKANITTDDKTLDEAEKNPLETSGASTVGFRERTLPGRKTSDDVNSEPVKSVEEQPQAEGPYAGAFERQKTLKVRAKLPQQEGPYAGPMERQKPLKVKAKAPVVKEGPYEGPVKKPVALKVKAKNLIVTESGAPPTDLQKMVMGNTKPVELILDGKTVAICCATGVFGTAYLVPRHLFAEKYDKIMLDGRAMTDSDYRVFEFEIKVKGQNMLSDAALMVLHRGNRVRDITKHFRDVAKMKKGTPVVGVINNADVGRLIFSGEALTYKDIVVCMDGDTMPGLFAYKAVTRAGYCGGAVLAKDGAETFIVGTHSAGGNGVGYCSCVSRSMLLKMKAHIDPEPHHEGLIVDTRDVEERVHVMRKTKLAPTVAHGVFNPEFGPAALSNKDPRLNEGVVLDEVIFSKHKGDTKMSEEDKALFRRCAADYASRLHSVLGTANAPLSIYEAIKGVDGLDAMEPDTAPGLPWALQGKRRGALIDFENGTVGPEVEAALKLMEKREYKFACQTFLKDEIRPMEKVRAGKTRIVDVLPVEHILYTRMMIGRFCAQMHSNNGPQIGSAVGCNPDVDWQRFGTHFAQYRNVWDVDYSAFDANHCSDAMNIMFEEVFRTEFGFHPNAEWILKTLVNTEHAYENKRIVVEGGMPSGCSATSIINTILNNIYVLYALRRHYEGVELDTYTMISYGDDIVVASDYDLDFEALKPHFKSLGQTITPADKSDKGFVLGHSITDVTFLKRHFHMDYGTGFYKPVMASKTLEAILSFARRGTIQEKLISVAGLAVHSGPDEYRRLFEPFQGLFEIPSYRSLYLRWVNAVCGDA.

One can recognise a Peptidase C28 domain in the interval 29-182 (MEFTLHNGEK…DPSDVLVFVP (154 aa)). Catalysis depends on for leader protease activity residues Cys51, His148, and Asp163. 2 disordered regions span residues 197–218 (QKRL…QSGN) and 238–264 (QLGD…NNTQ). Gly202 carries the N-myristoyl glycine; by host lipid modification. Composition is skewed to polar residues over residues 204 to 218 (GQSS…QSGN) and 238 to 251 (QLGD…SNEG). Low complexity predominate over residues 252-264 (STDTTSTHTNNTQ). The tract at residues 787 to 795 (ALLRSATYY) is antigenic epitope. A Cell attachment site motif is present at residues 866–868 (RGD). Positions 1186–1350 (NVHIANLCKV…DGYKINNKLD (165 aa)) constitute an SF3 helicase domain. An ATP-binding site is contributed by 1214–1221 (GKSGQGKS). An intramembrane segment occupies 1478–1498 (KENFEIVALCLTLLANIVIMI). Composition is skewed to basic and acidic residues over residues 1526–1535 (KTLDEAEKNP) and 1546–1558 (FRER…KTSD). Residues 1526–1577 (KTLDEAEKNPLETSGASTVGFRERTLPGRKTSDDVNSEPVKSVEEQPQAEGP) form a disordered region. An O-(5'-phospho-RNA)-tyrosine mark is found at Tyr1578, Tyr1601, and Tyr1625. The Peptidase C3 domain maps to 1649-1845 (APPTDLQKMV…YCSCVSRSML (197 aa)). The For protease 3C activity; Proton donor/acceptor role is filled by His1692. Residues Asp1730 and Cys1809 each act as for protease 3C activity in the active site. 2 consecutive short sequence motifs (nuclear localization signal) follow at residues 1875-1883 (MRKTKLAPT) and 1876-1883 (RKTKLAPT). Positions 2093-2211 (RNVWDVDYSA…ASDYDLDFEA (119 aa)) constitute a RdRp catalytic domain. Residue Asp2197 is the For RdRp activity of the active site.

Belongs to the picornaviruses polyprotein family. In terms of assembly, interacts with host ISG15. Interacts (via R-G-D motif) with host ITGAV/ITGB6. Interacts with host MAVS; this interaction inhibits binding of host TRAF3 to MAVS, thereby suppressing interferon-mediated responses. As to quaternary structure, forms homooligomers. In terms of assembly, homohexamer. Interacts with host VIM. Interacts with host BECN1. Interacts with host DCTN3. As to quaternary structure, interacts with RNA-dependent RNA polymerase; this interaction allows 3B-1 to binds 2 polymerases and act as a primer. It also allows the recruitment of the RNA-dependent RNA polymerase to host membranes. In terms of assembly, interacts with RNA-dependent RNA polymerase; this interaction allows 3B-2 to act as a primer. Interacts with RNA-dependent RNA polymerase; this interaction allows 3B-3 to act as a primer. As to quaternary structure, interacts with 3B-1; this interaction allows 3B-1 to binds 2 polymerases and act as a primer. It also allows the recruitment of the RNA-dependent RNA polymerase to host membranes. Interacts with 3B-2; this interaction allows 3B-2 to act as a primer. Interacts with 3B-3; this interaction allows 3B-3 to act as a primer. Specific enzymatic cleavages in vivo by the viral proteases yield a variety of precursors and mature proteins. The polyprotein seems to be cotranslationally cleaved at the 2A/2B junction by a ribosomal skip from one codon to the next without formation of a peptide bond. This process would release the L-P1-2A peptide from the translational complex. Post-translationally, during virion maturation, immature virions are rendered infectious following cleavage of VP0 into VP4 and VP2. This maturation seems to be an autocatalytic event triggered by the presence of RNA in the capsid and is followed by a conformational change of the particle. In terms of processing, myristoylation is required during RNA encapsidation and formation of the mature virus particle. Uridylylated by the polymerase and covalently linked to the 5'-end of genomic RNA. These uridylylated forms act as a nucleotide-peptide primer for the polymerase.

It localises to the host nucleus. It is found in the host cytoplasm. The protein localises to the virion. Its subcellular location is the host endoplasmic reticulum membrane. The protein resides in the host cytoplasmic vesicle membrane. It carries out the reaction Autocatalytically cleaves itself from the polyprotein of the foot-and-mouth disease virus by hydrolysis of a Lys-|-Gly bond, but then cleaves host cell initiation factor eIF-4G at bonds -Gly-|-Arg- and -Lys-|-Arg-.. It catalyses the reaction a ribonucleoside 5'-triphosphate + H2O = a ribonucleoside 5'-diphosphate + phosphate + H(+). The catalysed reaction is RNA(n) + a ribonucleoside 5'-triphosphate = RNA(n+1) + diphosphate. The enzyme catalyses Selective cleavage of Gln-|-Gly bond in the poliovirus polyprotein. In other picornavirus reactions Glu may be substituted for Gln, and Ser or Thr for Gly.. Its function is as follows. Autocatalytically cleaves itself from the polyprotein at the L/VP0 junction. Also cleaves the host translation initiation factors EIF4G1 and EIF4G3, in order to shut off the capped cellular mRNA transcription. Plays a role in counteracting host innate antiviral response using diverse mechanisms. Possesses a deubiquitinase activity acting on both 'Lys-48' and 'Lys-63'-linked polyubiquitin chains. In turn, inhibits the ubiquitination and subsequent activation of key signaling molecules of type I IFN response such as host RIGI, TBK1, TRAF3 and TRAF6. Inhibits host NF-kappa-B activity by inducing a decrease in RELA mRNA levels. Cleaves a peptide bond in the C-terminus of host ISG15, resulting in the damaging of this modifier that can no longer be attached to target proteins. Also cleaves host G3BP1 and G3BP2 in order to inhibit cytoplasmic stress granules assembly. Lies on the inner surface of the capsid shell. After binding to the host receptor, the capsid undergoes conformational changes. Capsid protein VP4 is released, capsid protein VP1 N-terminus is externalized, and together, they shape a pore in the host membrane through which the viral genome is translocated into the host cell cytoplasm. After genome has been released, the channel shrinks. In terms of biological role, forms an icosahedral capsid of pseudo T=3 symmetry with capsid proteins VP1 and VP3. The capsid is composed of 60 copies of each capsid protein organized in the form of twelve pentamers and encloses the viral positive strand RNA genome. Upon acidifcation in the endosome, dissociates into pentamers. Functionally, forms an icosahedral capsid of pseudo T=3 symmetry with capsid proteins VP0 and VP3. The capsid is composed of 60 copies of each capsid protein organized in the form of twelve pentamers and encloses the viral positive strand RNA genome. Upon acidifcation in the endosome, dissociates into pentamers. Its function is as follows. Forms an icosahedral capsid of pseudo T=3 symmetry with capsid proteins VP2 and VP3. The capsid is composed of 60 copies of each capsid protein organized in the form of twelve pentamers and encloses the viral positive strand RNA genome. Mediates cell entry by attachment to an integrin receptor, usually host ITGAV/ITGB6. In addition, targets host MAVS to suppress type I IFN pathway. Upon acidifcation in the endosome, dissociates into pentamers. Mediates self-processing of the polyprotein by a translational effect termed 'ribosome skipping'. Mechanistically, 2A-mediated cleavage occurs between the C-terminal glycine and the proline of the downstream protein 2B. In the case of foot-and-mouth disease virus, the 2A oligopeptide is post-translationally 'trimmed' from the C-terminus of the upstream protein 1D by 3C proteinase. In terms of biological role, plays an essential role in the virus replication cycle by acting as a viroporin. Creates a pore in the host endoplasmic reticulum and as a consequence releases Ca2+ in the cytoplasm of infected cell. In turn, high levels of cytoplasmic calcium may trigger membrane trafficking and transport of viral ER-associated proteins to viroplasms, sites of viral genome replication. Functionally, associates with and induces structural rearrangements of intracellular membranes. Triggers host autophagy by interacting with host BECN1 and thereby promotes viral replication. Participates in viral replication and interacts with host DHX9. Displays RNA-binding, nucleotide binding and NTPase activities. May play a role in virion morphogenesis and viral RNA encapsidation by interacting with the capsid protein VP3. Its function is as follows. Plays important roles in virus replication, virulence and host range. Cooperates with host DDX56 to inhibit IRF3 nuclear translocation and subsequent type I interferon production. Covalently linked to the 5'-end of both the positive-strand and negative-strand genomic RNAs. Acts as a genome-linked replication primer. In terms of biological role, cysteine protease that generates mature viral proteins from the precursor polyprotein. In addition to its proteolytic activity, binds to viral RNA and thus influences viral genome replication. RNA and substrate bind cooperatively to the protease. Functionally, RNA-directed RNA polymerase 3D-POL replicates genomic and antigenomic RNA by recognizing replications specific signals. Covalently attaches UMP to a tyrosine of VPg, which is used to prime RNA synthesis. The positive stranded RNA genome is first replicated at virus induced membranous vesicles, creating a dsRNA genomic replication form. This dsRNA is then used as template to synthesize positive stranded RNA genomes. ss(+)RNA genomes are either translated, replicated or encapsidated. This Foot-and-mouth disease virus serotype Asia-1 (FMDV) protein is Genome polyprotein.